A 2871-amino-acid polypeptide reads, in one-letter code: Desmoplakin (2871 aa).

An interaction with PKP1, JUP, PKP2 region spans residues 1–584 (MSCNGGSHPR…DYMKTIADLE (584 aa)). The segment at 1–1056 (MSCNGGSHPR…ANSENCNKNK (1056 aa)) is globular 1. 2 positions are modified to phosphoserine: S22 and S53. A Phosphotyrosine modification is found at Y56. Position 61 is a phosphothreonine (T61). Residues S165, S166, and S176 each carry the phosphoserine modification. Spectrin repeat units follow at residues 178–271 (SGWD…HLRQ) and 272–375 (LQNI…LKEN). The stretch at 376–446 (AAYFQFFEEA…NLVNKSKKIV (71 aa)) is one Spectrin 3a repeat. Residues 458–515 (NKPIILRALCDYKQDQKIVHKGDECILKDNNERSKWYVTGPGGVDMLVPSVGLIIPPP) enclose the SH3 domain. The Spectrin 3b repeat unit spans residues 516-545 (NPLAVDLSCKIEQYYEAILALWNQLYINMK). Spectrin repeat units follow at residues 546–627 (SLVS…IQLP), 654–769 (VIET…SLCT), and 770–883 (VRAL…DLEK). The stretch at 1018–1945 (SEMLKSLEDL…QREIDKLRQR (928 aa)) forms a coiled coil. Residues 1057 to 1945 (FLDQNLQKYQ…QREIDKLRQR (889 aa)) are central fibrous rod domain. S1658, S1708, and S2024 each carry phosphoserine. A globular 2 region spans residues 1946-2871 (PYGSHRETQT…YSFSSSSIGH (926 aa)). The 4.5 X 38 AA tandem repeats (Domain A) stretch occupies residues 1960–2208 (TVDTSKLVFD…LLLSVQKRSM (249 aa)). 17 Plectin repeats span residues 2009 to 2045 (QPFLRGAGSIAGASASPKEKYSLVEAKRKKLISPEST), 2046 to 2083 (VMLLEAQAATGGIIDPHRNEKLTVDSAIARDLIDFDDR), 2084 to 2121 (QQIYAAEKAITGFDDPFSGKTVSVSEAIKKNLIDRETG), 2122 to 2159 (MRLLEAQIASGGVVDPVNSVFLPKDVALARGLIDRDLY), 2163 to 2197 (NDPRDSQKNFVDPVTKKKVSYVQLKERCRIEPHTG), 2198 to 2233 (LLLLSVQKRSMSFQGIRQPVTVTELVDSGILRPSTV), 2251 to 2288 (KDFLQGSSCIAGIYNETTKQKLGIYEAMKIGLVRPGTA), 2289 to 2326 (LELLEAQAATGFIVDPVSNLRLPVEEAYKRGLVGIEFK), 2327 to 2364 (EKLLSAERAVTGYNDPETGNIISLFQAMNKELIEKGHG), 2365 to 2402 (IRLLEAQIATGGIIDPKESHRLPVDIAYKRGYFNEELS), 2406 to 2440 (SDPSDDTKGFFDPNTEENLTYLQLKERCIKDEETG), 2456 to 2493 (SQKNTLRKRRVVIVDPETNKEMSVQEAYKKGLIDYETF), 2507 to 2544 (TITGSDGSTRVVLVDRKTGSQYDIQDAIDKGLVDRKFF), 2610 to 2647 (SDTLEESSPIAAIFDTENLEKISITEGIERGIVDSITG), 2648 to 2685 (QRLLEAQACTGGIIHPTTGQKLSLQDAVSQGVIDQDMA), 2724 to 2761 (QRFLEFQYLTGGLVDPEVHGRISTEEAIRKGFIDGRAA), and 2762 to 2799 (QRLQDTSSYAKILTCPKTKLKISYKDAINRSMVEDITG). A phosphoserine mark is found at S2207, S2209, and S2225. Positions 2244–2446 (DEVGERIKDF…EETGLCLLPL (203 aa)) are 4.5 X 38 AA tandem repeats (Domain B). The tract at residues 2609-2822 (FSDTLEESSP…LPSPYNMSSA (214 aa)) is 4.5 X 38 AA tandem repeats (Domain C). 2 positions are modified to phosphoserine: S2810 and S2815. Residues 2810-2823 (SKGLPSPYNMSSAP) show a composition bias toward polar residues. The tract at residues 2810 to 2871 (SKGLPSPYNM…YSFSSSSIGH (62 aa)) is disordered. Y2817 carries the post-translational modification Phosphotyrosine. 3 positions are modified to phosphoserine: S2820, S2821, and S2825. A 6 X 4 AA tandem repeats of G-S-R-[SR] region spans residues 2824–2847 (GSRSGSRSGSRSGSRSGSRSGSRR). Low complexity predominate over residues 2824–2847 (GSRSGSRSGSRSGSRSGSRSGSRR). R2826 and R2847 each carry omega-N-methylarginine. S2849 carries the phosphoserine modification. T2853 bears the Phosphothreonine mark. A compositionally biased stretch (low complexity) spans 2856-2871 (SSYSYSYSFSSSSIGH). S2868 is modified (phosphoserine).

This sequence belongs to the plakin or cytolinker family. Homodimer. Interacts with COL17A1 (via cytoplasmic region). Interacts with DSC2. Interacts with PKP2. Interacts with PKP1. Interacts weakly with TMEM65. Phosphorylation at Ser-2849 increases association with intermediate filament cytokeratin, potentially facilitating interaction between desmosome junctions and intermediate filament architecture. As to expression, expressed in oral mucosa (at protein level). Expressed in arrector pili muscle (at protein level). Expressed in the heart in the heart (at protein level). Apparently an obligate constituent of all desmosomes. In terms of tissue distribution, resides predominantly in tissues and cells of stratified origin.

The protein resides in the cell junction. It is found in the desmosome. The protein localises to the cell membrane. Its subcellular location is the cytoplasm. Its function is as follows. Major high molecular weight protein of desmosomes. Regulates profibrotic gene expression in cardiomyocytes via activation of the MAPK14/p38 MAPK signaling cascade and increase in TGFB1 protein abundance. This Homo sapiens (Human) protein is Desmoplakin (DSP).